We begin with the raw amino-acid sequence, 968 residues long: MSKAELKDFTFKSRHIGPTNEDEALMLQHLGYENAEEFISSVIPNEIFDSENNGVSIPDGCDQNKALTEINIISKKNVEHRSLIGLGYHSTVIPPVIQRNVLENPNWYTAYTPYQAEISQGRLEALFNFQTLISELTGLPISNASLLDEATAAAEAISLSLTVRKNKNANKFLVDQEILPQTLDVLKTRCEPLGISLEMFDNNNFEIDKNVFGILIQLPGKNGRIWDPTKIINDAHKCNAIVTIAIDPLAQVLIKPMGEFGADIVVGSAQRFGVPIAFGGPHAAFFATKEIYKRQIPGRIVGQSVDVEGNQALRLALQTREQHIRRDKATSNICTAQVLLAVLSSFYAVHHGPKGLKQIAENVVKYRSNFESILMNLEYPIEKYSAFDSVDVYCSEASEVIQLASEEGYNLRVLPIGSDFENAKGFGVTFDELTCDEEIYKLHQILAQVKGKKTHDLSNFIFENASLIDIPLREKSWLEQSVFNQYQSETDLMRYIHCLVSKDFSLVQGMIPLGSCTMKLNAAAELLPIEWREFSSIHPFAPHTQLTGFHEIINDLENWLSALTGFQGVSLQPNAGSQGEFAGLLVIRSWHQSLGEGHRNICLIPTSAHGTNPASAVMSGFKVVSVKCDEYGNVDLEDLKNKSKIHSKNLAALMVTYPSTHGVFEPNIREMCQVIHQEGGQVYLDGANLNAQVGICRPGSYGIDVCHLNLHKTFSIPHGGGGPGVGPIAVADHLVPYLPGHSIIKCGGQKAISAVSAAPFGSAGILPISWMYIRMMGSDGLRKASSIAILSANYLAKRLDPYYPVLFKDPNGLVAHECILDLRPLKSQLGIEVEDVAKRLMDYGFHAPTISWPVAGTLMVEPTESESLPELDRFCDAMIGIREEIEQIKLGKIDPINNPLKQSPHTLKTVTSDDWDRPYSRKEAAYPLPDQEKYKFWPSVSRINNAYGDRNLICSCPSVQDLEDINSV.

At K712 the chain carries N6-(pyridoxal phosphate)lysine.

The protein belongs to the GcvP family. The glycine cleavage system is composed of four proteins: P, T, L and H. Pyridoxal 5'-phosphate is required as a cofactor.

The catalysed reaction is N(6)-[(R)-lipoyl]-L-lysyl-[glycine-cleavage complex H protein] + glycine + H(+) = N(6)-[(R)-S(8)-aminomethyldihydrolipoyl]-L-lysyl-[glycine-cleavage complex H protein] + CO2. Its function is as follows. The glycine cleavage system catalyzes the degradation of glycine. The P protein binds the alpha-amino group of glycine through its pyridoxal phosphate cofactor; CO(2) is released and the remaining methylamine moiety is then transferred to the lipoamide cofactor of the H protein. In Prochlorococcus marinus (strain NATL2A), this protein is Glycine dehydrogenase (decarboxylating).